The sequence spans 402 residues: Nodal homolog 4-A (402 aa).

The first 18 residues, 1–18, serve as a signal peptide directing secretion; it reads MHLYFYCLILLFVPGGNS. The propeptide occupies 19–278; the sequence is LGINSYLKHM…TIAHTRRHRR (260 aa). N37, N238, and N340 each carry an N-linked (GlcNAc...) asparagine glycan. Disulfide bonds link C302–C368, C331–C399, and C335–C401.

The protein belongs to the TGF-beta family. In terms of assembly, homodimer; disulfide-linked. In terms of tissue distribution, during blastula stages, expressed in the endoderm at a higher level dorsally than ventrally. Expressed in the deep cells of the Spemann organizer at the gastrula stage. Expressed in the notochord (a derivative of the organizer) and neural tube during the neural stages.

The protein resides in the secreted. In terms of biological role, cooperation and regulatory loops of multiple nodals are essential for mesendoderm patterning in early embryos. Plays a role in mesoderm formation and may be required for neural development. This chain is Nodal homolog 4-A (nodal4-a), found in Xenopus laevis (African clawed frog).